A 107-amino-acid polypeptide reads, in one-letter code: Thiosulfate sulfurtransferase GlpE (107 aa).

The 89-residue stretch at Lys19–Lys107 folds into the Rhodanese domain. Catalysis depends on Cys67, which acts as the Cysteine persulfide intermediate.

This sequence belongs to the GlpE family.

Its subcellular location is the cytoplasm. It carries out the reaction thiosulfate + hydrogen cyanide = thiocyanate + sulfite + 2 H(+). The enzyme catalyses thiosulfate + [thioredoxin]-dithiol = [thioredoxin]-disulfide + hydrogen sulfide + sulfite + 2 H(+). Functionally, transferase that catalyzes the transfer of sulfur from thiosulfate to thiophilic acceptors such as cyanide or dithiols. May function in a CysM-independent thiosulfate assimilation pathway by catalyzing the conversion of thiosulfate to sulfite, which can then be used for L-cysteine biosynthesis. This chain is Thiosulfate sulfurtransferase GlpE, found in Aliivibrio salmonicida (strain LFI1238) (Vibrio salmonicida (strain LFI1238)).